The chain runs to 20 residues: Allergen Asp fl 2 (20 aa).

The protein is Allergen Asp fl 2 of Aspergillus flavus.